A 235-amino-acid polypeptide reads, in one-letter code: Flagellar L-ring protein (235 aa).

An N-terminal signal peptide occupies residues 1–18 (MNKIAGTLFLLAGLAMAG). A lipid anchor (N-palmitoyl cysteine) is attached at C19. C19 carries S-diacylglycerol cysteine lipidation.

The protein belongs to the FlgH family. In terms of assembly, the basal body constitutes a major portion of the flagellar organelle and consists of four rings (L,P,S, and M) mounted on a central rod.

Its subcellular location is the cell outer membrane. The protein resides in the bacterial flagellum basal body. Functionally, assembles around the rod to form the L-ring and probably protects the motor/basal body from shearing forces during rotation. In Chelativorans sp. (strain BNC1), this protein is Flagellar L-ring protein.